Here is a 524-residue protein sequence, read N- to C-terminus: Glutamyl-tRNA(Gln) amidotransferase subunit A, mitochondrial (524 aa).

Residues K76 and S171 each act as charge relay system in the active site. S195 (acyl-ester intermediate) is an active-site residue.

This sequence belongs to the amidase family. GatA subfamily. Subunit of the heterotrimeric GatCAB amidotransferase (AdT) complex, composed of A (qrsl1), B (gatb) and C (gatc) subunits.

The protein localises to the mitochondrion. The enzyme catalyses L-glutamyl-tRNA(Gln) + L-glutamine + ATP + H2O = L-glutaminyl-tRNA(Gln) + L-glutamate + ADP + phosphate + H(+). Functionally, allows the formation of correctly charged Gln-tRNA(Gln) through the transamidation of misacylated Glu-tRNA(Gln) in the mitochondria. The reaction takes place in the presence of glutamine and ATP through an activated gamma-phospho-Glu-tRNA(Gln). This Xenopus tropicalis (Western clawed frog) protein is Glutamyl-tRNA(Gln) amidotransferase subunit A, mitochondrial (qrsl1).